Here is a 395-residue protein sequence, read N- to C-terminus: uncharacterized protein (395 aa).

Helical transmembrane passes span 19–39 (IGIA…IAII), 49–69 (VLLI…IYEL), 87–107 (LTWI…AVGG), 137–157 (LVII…PLGT), 172–192 (YINL…FYLI), 206–226 (TINI…SLIA), 252–272 (LIGG…MGMG), 279–299 (LFIM…KILA), 311–331 (GLVF…GSLI), and 359–379 (VLCT…GAVI).

It belongs to the chloride channel (TC 2.A.49) family.

It is found in the cell membrane. This is an uncharacterized protein from Methanocaldococcus jannaschii (strain ATCC 43067 / DSM 2661 / JAL-1 / JCM 10045 / NBRC 100440) (Methanococcus jannaschii).